We begin with the raw amino-acid sequence, 614 residues long: Vitamin B12 transporter BtuB (614 aa).

Positions 1 to 20 (MIKKASLLTACSVTAFSAWA) are cleaved as a signal peptide. A TonB box motif is present at residues 26–33 (DTLVVTAN). The TBDR plug domain maps to 38-152 (PRSTVLAPTT…IGGVVNIITT (115 aa)). Residues Leu83, Ser85, Asn92, and 110 to 111 (VS) contribute to the cyanocob(III)alamin site. A TBDR beta-barrel domain is found at 155 to 614 (HPGTEISAGW…EYTLSGSYTF (460 aa)). The next 3 beta stranded transmembrane spans lie at 158–165 (TEISAGWG), 169–178 (YQNYDVSTQQ), and 184–195 (TRVTLLGDYAHT). Ca(2+) is bound by residues Asp199, Gln211, Asp213, and Asp215. The next 2 beta stranded transmembrane spans lie at 217–227 (FLSKTLYGALE) and 232–248 (DVWS…NRTN). Positions 249 and 250 each coordinate Ca(2+). Ala251 lines the cyanocob(III)alamin pocket. Asp261 contributes to the Ca(2+) binding site. The next 14 beta stranded transmembrane spans lie at 263–277 (RKLY…LRYN), 279–296 (ELIK…KDYN), 309–325 (TLDE…NNII), 328–337 (HGNIGAGVDW), 353–369 (YDQR…QQVG), 371–381 (FTFEGAGRSDD), 385–400 (FGRH…WEFI), 403–417 (YRFI…KAPN), 434–443 (KSKQWEGAFE), 449–458 (VNWRISGYRN), 473–490 (YYNE…TANF), 494–509 (PLTH…ARNA), 517–529 (RRAK…QLDW), and 535–550 (DWGI…YDKD). Thr309 contributes to the cyanocob(III)alamin binding site. Residue Arg517 participates in cyanocob(III)alamin binding. Tyr551 contributes to the cyanocob(III)alamin binding site. 3 beta stranded membrane-spanning segments follow: residues 558-572 (TVKM…LAVA), 585-596 (IANLFDKDYETV), and 602-614 (AGRE…SYTF). The TonB C-terminal box motif lies at 597 to 614 (YGYQTAGREYTLSGSYTF).

The protein belongs to the TonB-dependent receptor family. BtuB (TC 1.B.14.3.1) subfamily.

The protein resides in the cell outer membrane. In terms of biological role, involved in the active translocation of vitamin B12 (cyanocobalamin) across the outer membrane to the periplasmic space. It derives its energy for transport by interacting with the trans-periplasmic membrane protein TonB. This chain is Vitamin B12 transporter BtuB, found in Escherichia coli O1:K1 / APEC.